The sequence spans 426 residues: Phosphomethylpyrimidine synthase (426 aa).

Residues Asn-65, Met-94, Tyr-123, His-162, 184-186, 225-228, and Glu-264 each bind substrate; these read SRG and DGLR. His-268 provides a ligand contact to Zn(2+). Tyr-291 lines the substrate pocket. Zn(2+) is bound at residue His-332. Residues Cys-409, Cys-412, and Cys-416 each contribute to the [4Fe-4S] cluster site.

The protein belongs to the ThiC family. Requires [4Fe-4S] cluster as cofactor.

It catalyses the reaction 5-amino-1-(5-phospho-beta-D-ribosyl)imidazole + S-adenosyl-L-methionine = 4-amino-2-methyl-5-(phosphooxymethyl)pyrimidine + CO + 5'-deoxyadenosine + formate + L-methionine + 3 H(+). It functions in the pathway cofactor biosynthesis; thiamine diphosphate biosynthesis. Catalyzes the synthesis of the hydroxymethylpyrimidine phosphate (HMP-P) moiety of thiamine from aminoimidazole ribotide (AIR) in a radical S-adenosyl-L-methionine (SAM)-dependent reaction. This Thermodesulfovibrio yellowstonii (strain ATCC 51303 / DSM 11347 / YP87) protein is Phosphomethylpyrimidine synthase.